An 837-amino-acid chain; its full sequence is Tuftelin-interacting protein 11 (837 aa).

Composition is skewed to basic and acidic residues over residues Met1–Arg13 and Val53–Pro64. 3 disordered regions span residues Met1–Arg21, Val53–Arg72, and Leu85–Ala133. Residues Met1–Thr50 form a required for interaction with DHX15 region. Phosphoserine is present on residues Ser2, Ser59, and Ser98. The segment covering Glu91–Glu102 has biased composition (acidic residues). A compositionally biased stretch (basic and acidic residues) spans Lys103 to Pro116. Residue Ser144 is modified to Phosphoserine. Residues Thr149 to Ser195 enclose the G-patch domain. Residues Ile179–Pro236 form a disordered region. Ser210 is modified (phosphoserine). Positions Glu217–Gly231 are enriched in basic and acidic residues. Positions Val700 to Asn705 match the Nuclear localization signal motif. The tract at residues Ile710–Leu734 is required for nuclear speckle localization.

This sequence belongs to the TFP11/STIP family. In terms of assembly, identified in the spliceosome C complex. Found in the Intron Large (IL) complex, a post-mRNA release spliceosomal complex containing the excised intron, U2, U5 and U6 snRNPs, and splicing factors. Interacts with TUFT1. Interacts with DHX15; indicative for a recruitment of DHX15 to the IL complex. Interacts with GCFC2.

The protein resides in the cytoplasm. The protein localises to the nucleus. In terms of biological role, involved in pre-mRNA splicing, specifically in spliceosome disassembly during late-stage splicing events. Intron turnover seems to proceed through reactions in two lariat-intron associated complexes termed Intron Large (IL) and Intron Small (IS). In cooperation with DHX15 seems to mediate the transition of the U2, U5 and U6 snRNP-containing IL complex to the snRNP-free IS complex leading to efficient debranching and turnover of excised introns. May play a role in the differentiation of ameloblasts and odontoblasts or in the forming of the enamel extracellular matrix. The polypeptide is Tuftelin-interacting protein 11 (TFIP11) (Pan troglodytes (Chimpanzee)).